The following is a 355-amino-acid chain: Phosphoribosylformylglycinamidine cyclo-ligase (355 aa).

Belongs to the AIR synthase family.

It localises to the cytoplasm. The enzyme catalyses 2-formamido-N(1)-(5-O-phospho-beta-D-ribosyl)acetamidine + ATP = 5-amino-1-(5-phospho-beta-D-ribosyl)imidazole + ADP + phosphate + H(+). Its pathway is purine metabolism; IMP biosynthesis via de novo pathway; 5-amino-1-(5-phospho-D-ribosyl)imidazole from N(2)-formyl-N(1)-(5-phospho-D-ribosyl)glycinamide: step 2/2. In Beijerinckia indica subsp. indica (strain ATCC 9039 / DSM 1715 / NCIMB 8712), this protein is Phosphoribosylformylglycinamidine cyclo-ligase.